Consider the following 126-residue polypeptide: Holo-[acyl-carrier-protein] synthase (126 aa).

Mg(2+) contacts are provided by Asp-9 and Glu-58.

It belongs to the P-Pant transferase superfamily. AcpS family. Requires Mg(2+) as cofactor.

It localises to the cytoplasm. It carries out the reaction apo-[ACP] + CoA = holo-[ACP] + adenosine 3',5'-bisphosphate + H(+). In terms of biological role, transfers the 4'-phosphopantetheine moiety from coenzyme A to a Ser of acyl-carrier-protein. This Aliivibrio salmonicida (strain LFI1238) (Vibrio salmonicida (strain LFI1238)) protein is Holo-[acyl-carrier-protein] synthase.